We begin with the raw amino-acid sequence, 409 residues long: Fructose-1,6-bisphosphatase, chloroplastic (409 aa).

The N-terminal 49 residues, 1 to 49 (MAAATTTTSRPLLLSRQQAAASSLQCRLPRRPGSSLFAGQGQASTPNVR), are a transit peptide targeting the chloroplast. Glutamate 131, glutamate 160, aspartate 181, leucine 183, and aspartate 184 together coordinate Mg(2+). 184–187 (DGSS) is a binding site for substrate. Cysteines 223 and 228 form a disulfide. Substrate is bound by residues asparagine 287, tyrosine 319, tyrosine 337, tyrosine 339, and lysine 349. Residue glutamate 355 participates in Mg(2+) binding.

This sequence belongs to the FBPase class 1 family. Homotetramer. It depends on Mg(2+) as a cofactor. In terms of tissue distribution, in photosynthetically active tissues, and in the shoot and root apical meristems.

Its subcellular location is the plastid. The protein resides in the chloroplast. It catalyses the reaction beta-D-fructose 1,6-bisphosphate + H2O = beta-D-fructose 6-phosphate + phosphate. The protein operates within carbohydrate biosynthesis; Calvin cycle. This is Fructose-1,6-bisphosphatase, chloroplastic (FBP) from Triticum aestivum (Wheat).